Here is a 904-residue protein sequence, read N- to C-terminus: Translation initiation factor IF-2 (904 aa).

The interval 239–316 (QAATQAKTSE…DDGQGSFQAP (78 aa)) is disordered. Residues 248-278 (EGAEKGTLHKKPETPGKKGDKGGRAADDGKK) show a composition bias toward basic and acidic residues. Positions 404–571 (HRAPVVTVMG…QVLLQAEILE (168 aa)) constitute a tr-type G domain. Residues 413–420 (GHVDHGKT) form a G1 region. Residue 413–420 (GHVDHGKT) participates in GTP binding. The interval 438–442 (GITQH) is G2. The interval 459–462 (DTPG) is G3. GTP-binding positions include 459–463 (DTPGH) and 513–516 (NKID). Residues 513–516 (NKID) are G4. The G5 stretch occupies residues 549-551 (SAK).

It belongs to the TRAFAC class translation factor GTPase superfamily. Classic translation factor GTPase family. IF-2 subfamily.

The protein resides in the cytoplasm. In terms of biological role, one of the essential components for the initiation of protein synthesis. Protects formylmethionyl-tRNA from spontaneous hydrolysis and promotes its binding to the 30S ribosomal subunits. Also involved in the hydrolysis of GTP during the formation of the 70S ribosomal complex. The sequence is that of Translation initiation factor IF-2 from Dechloromonas aromatica (strain RCB).